Here is a 773-residue protein sequence, read N- to C-terminus: Acyl-homoserine lactone acylase PvdQ (773 aa).

The N-terminal stretch at 1 to 23 (MSRALPGFLFAGLSVAVVLPAQA) is a signal peptide. The propeptide at 200-221 (SQQVQALQLAAARNERFALERG) is spacer peptide. Ser222 serves as the catalytic Nucleophile.

Belongs to the peptidase S45 family. Heterodimer of an alpha subunit and a beta subunit processed from the same precursor.

The protein localises to the periplasm. It catalyses the reaction an N-acyl-L-homoserine lactone + H2O = L-homoserine lactone + a carboxylate. Functionally, catalyzes the deacylation of acyl-homoserine lactone (AHL or acyl-HSL), releasing homoserine lactone (HSL) and the corresponding fatty acid. Possesses a specificity for the degradation of long-chain acyl-HSLs (side chains of 11 to 14 carbons in length). In Pseudomonas syringae pv. tomato (strain ATCC BAA-871 / DC3000), this protein is Acyl-homoserine lactone acylase PvdQ (pvdQ).